Consider the following 293-residue polypeptide: 33 kDa chaperonin (293 aa).

Disulfide bonds link Cys238–Cys240 and Cys271–Cys274.

Belongs to the HSP33 family. Post-translationally, under oxidizing conditions two disulfide bonds are formed involving the reactive cysteines. Under reducing conditions zinc is bound to the reactive cysteines and the protein is inactive.

The protein localises to the cytoplasm. Redox regulated molecular chaperone. Protects both thermally unfolding and oxidatively damaged proteins from irreversible aggregation. Plays an important role in the bacterial defense system toward oxidative stress. The sequence is that of 33 kDa chaperonin from Staphylococcus aureus (strain USA300).